Here is a 399-residue protein sequence, read N- to C-terminus: Elongation factor Tu (399 aa).

The tr-type G domain maps to 10 to 209 (KPHVNVGTIG…EVDKYIPTPQ (200 aa)). The G1 stretch occupies residues 19 to 26 (GHVDHGKT). 19 to 26 (GHVDHGKT) lines the GTP pocket. Thr-26 lines the Mg(2+) pocket. The interval 60 to 64 (GITIA) is G2. The segment at 81-84 (DCPG) is G3. GTP contacts are provided by residues 81-85 (DCPGH) and 136-139 (NKQD). The tract at residues 136–139 (NKQD) is G4. The G5 stretch occupies residues 174 to 176 (SAL).

This sequence belongs to the TRAFAC class translation factor GTPase superfamily. Classic translation factor GTPase family. EF-Tu/EF-1A subfamily. Monomer.

It is found in the cytoplasm. The enzyme catalyses GTP + H2O = GDP + phosphate + H(+). Functionally, GTP hydrolase that promotes the GTP-dependent binding of aminoacyl-tRNA to the A-site of ribosomes during protein biosynthesis. The polypeptide is Elongation factor Tu (Helicobacter hepaticus (strain ATCC 51449 / 3B1)).